Reading from the N-terminus, the 1388-residue chain is DNA-directed RNA polymerase subunit beta' (1388 aa).

Zn(2+) contacts are provided by C76, C78, C91, and C94. 3 residues coordinate Mg(2+): D467, D469, and D471. Residues C810, C884, C891, and C894 each contribute to the Zn(2+) site.

It belongs to the RNA polymerase beta' chain family. In terms of assembly, the RNAP catalytic core consists of 2 alpha, 1 beta, 1 beta' and 1 omega subunit. When a sigma factor is associated with the core the holoenzyme is formed, which can initiate transcription. Mg(2+) serves as cofactor. Zn(2+) is required as a cofactor.

The catalysed reaction is RNA(n) + a ribonucleoside 5'-triphosphate = RNA(n+1) + diphosphate. Functionally, DNA-dependent RNA polymerase catalyzes the transcription of DNA into RNA using the four ribonucleoside triphosphates as substrates. This Lawsonia intracellularis (strain PHE/MN1-00) protein is DNA-directed RNA polymerase subunit beta'.